The primary structure comprises 326 residues: Beta-1,3-galactosyltransferase 1 (326 aa).

Residues 1-6 (MASKVS) are Cytoplasmic-facing. Residues 7–26 (CLYVLTVVCWASALWYLSIT) traverse the membrane as a helical; Signal-anchor for type II membrane protein segment. Residues 27 to 326 (RPTSSYTGSK…DMSSKKHLRC (300 aa)) are Lumenal-facing. N-linked (GlcNAc...) asparagine glycosylation is found at Asn47 and Asn151.

Belongs to the glycosyltransferase 31 family. The cofactor is Mn(2+).

The protein localises to the golgi apparatus membrane. The catalysed reaction is an N-acetyl-beta-D-glucosaminyl derivative + UDP-alpha-D-galactose = a beta-D-galactosyl-(1-&gt;3)-N-acetyl-beta-D-glucosaminyl derivative + UDP + H(+). It carries out the reaction a beta-D-GlcNAc-(1-&gt;3)-beta-D-Gal-(1-&gt;4)-beta-D-Glc-(1&lt;-&gt;1)-Cer(d18:1(4E)) + UDP-alpha-D-galactose = a beta-D-Gal-(1-&gt;3)-beta-D-GlcNAc-(1-&gt;3)-beta-D-Gal-(1-&gt;4)-beta-D-Glc-(1&lt;-&gt;1')-Cer(d18:1(4E)) + UDP + H(+). Its pathway is protein modification; protein glycosylation. Functionally, beta-1,3-galactosyltransferase that transfers galactose from UDP-galactose to substrates with a terminal beta-N-acetylglucosamine (beta-GlcNAc) residue. Involved in the biosynthesis of the carbohydrate moieties of glycolipids and glycoproteins. The chain is Beta-1,3-galactosyltransferase 1 (B3GALT1) from Gorilla gorilla gorilla (Western lowland gorilla).